Here is a 395-residue protein sequence, read N- to C-terminus: Putative 8-amino-7-oxononanoate synthase (395 aa).

Substrate is bound at residue Arg-23. A pyridoxal 5'-phosphate-binding site is contributed by 110–111; it reads GY. Substrate is bound at residue His-135. Pyridoxal 5'-phosphate is bound by residues Ser-182, 207-210, and 239-242; these read DEAH and TFSK. Lys-242 is modified (N6-(pyridoxal phosphate)lysine). Residue Thr-356 coordinates substrate.

This sequence belongs to the class-II pyridoxal-phosphate-dependent aminotransferase family. BioF subfamily. In terms of assembly, homodimer. The cofactor is pyridoxal 5'-phosphate.

It catalyses the reaction 6-carboxyhexanoyl-[ACP] + L-alanine + H(+) = (8S)-8-amino-7-oxononanoate + holo-[ACP] + CO2. It participates in cofactor biosynthesis; biotin biosynthesis. Catalyzes the decarboxylative condensation of pimeloyl-[acyl-carrier protein] and L-alanine to produce 8-amino-7-oxononanoate (AON), [acyl-carrier protein], and carbon dioxide. This chain is Putative 8-amino-7-oxononanoate synthase (bioF), found in Bacillus cereus (strain G9842).